A 176-amino-acid chain; its full sequence is Large ribosomal subunit protein eL20 (176 aa).

A Glycyl lysine isopeptide (Lys-Gly) (interchain with G-Cter in SUMO2) cross-link involves residue Lys11. Tyr63 carries the phosphotyrosine modification. A Phosphoserine modification is found at Ser71. An N6-succinyllysine modification is found at Lys76. The residue at position 123 (Ser123) is a Phosphoserine. Glycyl lysine isopeptide (Lys-Gly) (interchain with G-Cter in SUMO2) cross-links involve residues Lys128 and Lys170.

This sequence belongs to the eukaryotic ribosomal protein eL20 family. Component of the large ribosomal subunit. Binds IPO9 with high affinity.

Its subcellular location is the cytoplasm. Functionally, component of the large ribosomal subunit. The ribosome is a large ribonucleoprotein complex responsible for the synthesis of proteins in the cell. In Oryctolagus cuniculus (Rabbit), this protein is Large ribosomal subunit protein eL20 (RPL18A).